A 65-amino-acid polypeptide reads, in one-letter code: Large ribosomal subunit protein uL29 (65 aa).

This sequence belongs to the universal ribosomal protein uL29 family.

The protein is Large ribosomal subunit protein uL29 of Acidithiobacillus ferrooxidans (strain ATCC 23270 / DSM 14882 / CIP 104768 / NCIMB 8455) (Ferrobacillus ferrooxidans (strain ATCC 23270)).